The primary structure comprises 397 residues: Purine ribonucleoside efflux pump NepI (397 aa).

The Cytoplasmic segment spans residues methionine 1–alanine 21. A helical membrane pass occupies residues valine 22 to leucine 42. The Periplasmic segment spans residues leucine 43–glutamate 54. The chain crosses the membrane as a helical span at residues glycine 55–isoleucine 75. Residues threonine 76–arginine 85 lie on the Cytoplasmic side of the membrane. A helical transmembrane segment spans residues tyrosine 86–asparagine 106. Position 107 (serine 107) is a topological domain, periplasmic. Residues phenylalanine 108–methionine 128 form a helical membrane-spanning segment. At serine 129–serine 147 the chain is on the cytoplasmic side. Residues valine 148–glycine 168 traverse the membrane as a helical segment. The Periplasmic portion of the chain corresponds to glycine 169–asparagine 175. A helical transmembrane segment spans residues valine 176 to proline 196. Residues serine 197–arginine 215 are Cytoplasmic-facing. Residues proline 216–phenylalanine 236 form a helical membrane-spanning segment. Over threonine 237–threonine 255 the chain is Periplasmic. Residues leucine 256 to leucine 276 form a helical membrane-spanning segment. At lysine 277–lysine 281 the chain is on the cytoplasmic side. The chain crosses the membrane as a helical span at residues leucine 282–glycine 302. At serine 303–lysine 305 the chain is on the periplasmic side. Residues threonine 306–tryptophan 326 form a helical membrane-spanning segment. The Cytoplasmic segment spans residues serine 327–serine 343. Residues isoleucine 344–leucine 364 traverse the membrane as a helical segment. Residues aspartate 365 to asparagine 366 lie on the Periplasmic side of the membrane. A helical transmembrane segment spans residues phenylalanine 367 to valine 387. Residues alanine 388 to serine 397 lie on the Cytoplasmic side of the membrane.

It belongs to the major facilitator superfamily. DHA1 family. NepI (TC 2.A.1.2.26) subfamily.

It is found in the cell inner membrane. The enzyme catalyses inosine(in) + H(+)(out) = inosine(out) + H(+)(in). It catalyses the reaction guanosine(in) + H(+)(out) = guanosine(out) + H(+)(in). Its function is as follows. Involved in the efflux of purine ribonucleosides, such as inosine and guanosine. The polypeptide is Purine ribonucleoside efflux pump NepI (Salmonella enteritidis PT4 (strain P125109)).